A 108-amino-acid chain; its full sequence is CDGSH iron-sulfur domain-containing protein 1 (108 aa).

The helical; Signal-anchor for type III membrane protein transmembrane segment at 14 to 31 (IAAVTFAAGTAALGYLAY) threads the bilayer. At 32-108 (KKFYAKENRT…GPLIIKKKET (77 aa)) the chain is on the cytoplasmic side. Lysine 42 is covalently cross-linked (Glycyl lysine isopeptide (Lys-Gly) (interchain with G-Cter in ubiquitin)). The active-site Schiff-base intermediate with pyridoxal 5'-phosphate is lysine 55. An N6-acetyllysine; alternate mark is found at lysine 55 and lysine 68. Residues lysine 55 and lysine 68 each participate in a glycyl lysine isopeptide (Lys-Gly) (interchain with G-Cter in ubiquitin); alternate cross-link. [2Fe-2S] cluster-binding residues include cysteine 72 and cysteine 74. Glycyl lysine isopeptide (Lys-Gly) (interchain with G-Cter in ubiquitin) cross-links involve residues lysine 78 and lysine 79. Positions 83 and 87 each coordinate [2Fe-2S] cluster. A Glycyl lysine isopeptide (Lys-Gly) (interchain with G-Cter in ubiquitin) cross-link involves residue lysine 89. Lysine 104 bears the N6-acetyllysine; alternate mark. A Glycyl lysine isopeptide (Lys-Gly) (interchain with G-Cter in ubiquitin); alternate cross-link involves residue lysine 104. Glycyl lysine isopeptide (Lys-Gly) (interchain with G-Cter in ubiquitin) cross-links involve residues lysine 105 and lysine 106.

This sequence belongs to the CISD protein family. In terms of assembly, homodimer. It depends on [2Fe-2S] cluster as a cofactor. Pyridoxal 5'-phosphate is required as a cofactor. Post-translationally, ubiquitinated by PRKN during mitophagy, leading to its degradation and enhancement of mitophagy. Deubiquitinated by USP30. Liver, adipose, skeletal muscle and heart (at protein level). Widely expressed. Expressed at the highest levels in the heart.

It is found in the mitochondrion outer membrane. The enzyme catalyses L-cysteine + 2-oxoglutarate = 2-oxo-3-sulfanylpropanoate + L-glutamate. Its function is as follows. L-cysteine transaminase that catalyzes the reversible transfer of the amino group from L-cysteine to the alpha-keto acid 2-oxoglutarate to respectively form 2-oxo-3-sulfanylpropanoate and L-glutamate. The catalytic cycle occurs in the presence of pyridoxal 5'-phosphate (PLP) cofactor that facilitates transamination by initially forming an internal aldimine with the epsilon-amino group of active site Lys-55 residue on the enzyme (PLP-enzyme aldimine), subsequently displaced by formation of an external aldimine with the substrate amino group (PLP-L-cysteine aldimine). The external aldimine is further deprotonated to form a carbanion intermediate, which in the presence of 2-oxoglutarate regenerates PLP yielding final products 2-oxo-3-sulfanylpropanoate and L-glutamate. The proton transfer in carbanion intermediate is suggested to be controlled by the active site lysine residue, whereas PLP stabilizes carbanion structure through electron delocalization, also known as the electron sink effect. Plays a key role in regulating maximal capacity for electron transport and oxidative phosphorylation. May be involved in iron-sulfur cluster shuttling and/or in redox reactions. Can transfer the [2Fe-2S] cluster to an apo-acceptor protein only when in the oxidation state, likely serving as a redox sensor that regulates mitochondrial iron-sulfur cluster assembly and iron trafficking upon oxidative stress. The polypeptide is CDGSH iron-sulfur domain-containing protein 1 (Cisd1) (Mus musculus (Mouse)).